The chain runs to 194 residues: Peptidyl-tRNA hydrolase (194 aa).

Tyrosine 16 is a tRNA binding site. The active-site Proton acceptor is the histidine 21. TRNA is bound by residues phenylalanine 67, asparagine 69, and asparagine 115.

This sequence belongs to the PTH family. In terms of assembly, monomer.

It localises to the cytoplasm. The catalysed reaction is an N-acyl-L-alpha-aminoacyl-tRNA + H2O = an N-acyl-L-amino acid + a tRNA + H(+). Its function is as follows. Hydrolyzes ribosome-free peptidyl-tRNAs (with 1 or more amino acids incorporated), which drop off the ribosome during protein synthesis, or as a result of ribosome stalling. In terms of biological role, catalyzes the release of premature peptidyl moieties from peptidyl-tRNA molecules trapped in stalled 50S ribosomal subunits, and thus maintains levels of free tRNAs and 50S ribosomes. This chain is Peptidyl-tRNA hydrolase, found in Sodalis glossinidius (strain morsitans).